The chain runs to 338 residues: NAD kinase (338 aa).

The active-site Proton acceptor is the Asp66. Residues 66–67 (DG), Arg71, 141–142 (ND), Lys152, Asp171, 182–187 (TAYAFS), and Ala206 each bind NAD(+). Residues 317–338 (GDAGVAGTEPDKPGERDGKAGA) form a disordered region. Positions 325 to 338 (EPDKPGERDGKAGA) are enriched in basic and acidic residues.

It belongs to the NAD kinase family. A divalent metal cation is required as a cofactor.

The protein localises to the cytoplasm. It catalyses the reaction NAD(+) + ATP = ADP + NADP(+) + H(+). Its function is as follows. Involved in the regulation of the intracellular balance of NAD and NADP, and is a key enzyme in the biosynthesis of NADP. Catalyzes specifically the phosphorylation on 2'-hydroxyl of the adenosine moiety of NAD to yield NADP. The chain is NAD kinase from Bifidobacterium longum subsp. infantis (strain ATCC 15697 / DSM 20088 / JCM 1222 / NCTC 11817 / S12).